Here is a 220-residue protein sequence, read N- to C-terminus: Putative phosphatase YhcW (220 aa).

The active-site Nucleophile is the Asp8. A divalent metal cation-binding residues include Asp8, Asp10, and Asp166. The Proton donor role is filled by Asp10.

Belongs to the HAD-like hydrolase superfamily. CbbY/CbbZ/Gph/YieH family. A divalent metal cation is required as a cofactor.

The protein is Putative phosphatase YhcW (yhcW) of Bacillus subtilis (strain 168).